We begin with the raw amino-acid sequence, 739 residues long: Eukaryotic translation initiation factor 3 subunit B (739 aa).

The 87-residue stretch at 39–125 (AFVVIDGLPV…HTLAVNKLTD (87 aa)) folds into the RRM domain. WD repeat units lie at residues 191-229 (RDHWTQLFVQWSPLGTYLASVHPQGVQLWGGPQFGKQKQ), 231-288 (PHPF…RSFV), 457-498 (SLKD…SFFA), 516-559 (IEKK…EKPE), and 574-612 (NEHFGVTDIDWDPTGRYVVSSASAWTHSLENGYHIHTFS).

It belongs to the eIF-3 subunit B family. As to quaternary structure, component of the eukaryotic translation initiation factor 3 (eIF-3) complex.

The protein localises to the cytoplasm. Functionally, RNA-binding component of the eukaryotic translation initiation factor 3 (eIF-3) complex, which is involved in protein synthesis of a specialized repertoire of mRNAs and, together with other initiation factors, stimulates binding of mRNA and methionyl-tRNAi to the 40S ribosome. The eIF-3 complex specifically targets and initiates translation of a subset of mRNAs involved in cell proliferation. This chain is Eukaryotic translation initiation factor 3 subunit B, found in Coccidioides immitis (strain RS) (Valley fever fungus).